A 128-amino-acid chain; its full sequence is Small ribosomal subunit protein uS9c (128 aa).

This sequence belongs to the universal ribosomal protein uS9 family.

It is found in the plastid. This Euglena longa (Euglenophycean alga) protein is Small ribosomal subunit protein uS9c (rps9).